Here is a 631-residue protein sequence, read N- to C-terminus: Phosphomethylpyrimidine synthase (631 aa).

Substrate-binding positions include Asn-239, Met-268, Tyr-297, His-333, 353–355, 394–397, and Glu-433; these read SRG and DGLR. Zn(2+) is bound at residue His-437. Tyr-460 is a substrate binding site. Zn(2+) is bound at residue His-501. The [4Fe-4S] cluster site is built by Cys-581, Cys-584, and Cys-589.

Belongs to the ThiC family. As to quaternary structure, homodimer. It depends on [4Fe-4S] cluster as a cofactor.

It catalyses the reaction 5-amino-1-(5-phospho-beta-D-ribosyl)imidazole + S-adenosyl-L-methionine = 4-amino-2-methyl-5-(phosphooxymethyl)pyrimidine + CO + 5'-deoxyadenosine + formate + L-methionine + 3 H(+). The protein operates within cofactor biosynthesis; thiamine diphosphate biosynthesis. Functionally, catalyzes the synthesis of the hydroxymethylpyrimidine phosphate (HMP-P) moiety of thiamine from aminoimidazole ribotide (AIR) in a radical S-adenosyl-L-methionine (SAM)-dependent reaction. The sequence is that of Phosphomethylpyrimidine synthase from Salmonella typhi.